An 833-amino-acid chain; its full sequence is Leucine--tRNA ligase (833 aa).

The short motif at 41 to 52 (PYPSGAGLHVGH) is the 'HIGH' region element. Residues 610–614 (KMSKS) carry the 'KMSKS' region motif. K613 lines the ATP pocket.

It belongs to the class-I aminoacyl-tRNA synthetase family.

Its subcellular location is the cytoplasm. It carries out the reaction tRNA(Leu) + L-leucine + ATP = L-leucyl-tRNA(Leu) + AMP + diphosphate. This Streptococcus agalactiae serotype III (strain NEM316) protein is Leucine--tRNA ligase.